A 620-amino-acid chain; its full sequence is Ran-binding protein 10 (620 aa).

Residues 1-41 are disordered; that stretch reads MAAATADPGAGNPQPGDSSGGGAGGGLPSPGEQELSRRLQR. A2 carries the N-acetylalanine modification. Over residues 18–28 the composition is skewed to gly residues; it reads SSGGGAGGGLP. Residues 35 to 222 enclose the B30.2/SPRY domain; sequence LSRRLQRLYP…VDANFGQQPF (188 aa). One can recognise a LisH domain in the interval 253-285; sequence WQAVLQNMVSSYLVHHGYCATATAFARMTETPI. Positions 291 to 348 constitute a CTLH domain; that stretch reads SIKNRQKIQKLVLEGRVGEAIETTQRFYPGLLEHNPNLLFMLKCRQFVEMVNGTDSEV. The span at 347 to 398 shows a compositional bias: polar residues; it reads EVRSLSSRSPKSQDSYPGSPSLSPRHGPSSSHMHNTGADSPSCSNGVASTKS. A disordered region spans residues 347–458; it reads EVRSLSSRSP…ETSDSEMEME (112 aa). Phosphoserine is present on S361. Y362 carries the post-translational modification Phosphotyrosine. Phosphoserine occurs at positions 365, 367, 369, 422, 451, and 453. A compositionally biased stretch (low complexity) spans 409-436; the sequence is SSSSSSSSSSSSSSPSSVNYSESNSTDS.

The protein belongs to the RANBP9/10 family. In terms of assembly, may form homodimers. Identified in the CTLH complex that contains GID4, RANBP9 and/or RANBP10, MKLN1, MAEA, RMND5A (or alternatively its paralog RMND5B), GID8, ARMC8, WDR26 and YPEL5. Within this complex, MAEA, RMND5A (or alternatively its paralog RMND5B), GID8, WDR26, and RANBP9 and/or RANBP10 form the catalytic core, while GID4, MKLN1, ARMC8 and YPEL5 have ancillary roles. Interacts with RAN and RANBP9. Interacts with the HGF receptor MET. Interacts with AR. Interacts with TUBB1. Interacts with YPEL5. May interact with TUBB5. Interacts with DDX4. In terms of tissue distribution, broadly expressed, with highest levels in skeletal muscle.

The protein resides in the cytoplasm. Its subcellular location is the cytosol. It is found in the nucleus. May act as an adapter protein to couple membrane receptors to intracellular signaling pathways. Core component of the CTLH E3 ubiquitin-protein ligase complex that selectively accepts ubiquitin from UBE2H and mediates ubiquitination and subsequent proteasomal degradation of the transcription factor HBP1. Enhances dihydrotestosterone-induced transactivation activity of AR, as well as dexamethasone-induced transactivation activity of NR3C1, but does not affect estrogen-induced transactivation. Acts as a guanine nucleotide exchange factor (GEF) for RAN GTPase. May play an essential role in hemostasis and in maintaining microtubule dynamics with respect to both platelet shape and function. This chain is Ran-binding protein 10 (RANBP10), found in Homo sapiens (Human).